Reading from the N-terminus, the 641-residue chain is Threonine--tRNA ligase (641 aa).

Residues Met-1–Thr-61 form the TGS domain. The catalytic stretch occupies residues Asp-243–Pro-536. 3 residues coordinate Zn(2+): Cys-336, His-387, and His-513.

It belongs to the class-II aminoacyl-tRNA synthetase family. Homodimer. Requires Zn(2+) as cofactor.

Its subcellular location is the cytoplasm. The catalysed reaction is tRNA(Thr) + L-threonine + ATP = L-threonyl-tRNA(Thr) + AMP + diphosphate + H(+). Its function is as follows. Catalyzes the attachment of threonine to tRNA(Thr) in a two-step reaction: L-threonine is first activated by ATP to form Thr-AMP and then transferred to the acceptor end of tRNA(Thr). Also edits incorrectly charged L-seryl-tRNA(Thr). This chain is Threonine--tRNA ligase, found in Gluconacetobacter diazotrophicus (strain ATCC 49037 / DSM 5601 / CCUG 37298 / CIP 103539 / LMG 7603 / PAl5).